The primary structure comprises 382 residues: Gap junction alpha-1 protein (382 aa).

Over 2 to 23 (GDWSALGKLLDKVQAYSTAGGK) the chain is Cytoplasmic. Phosphoserine is present on S5. Residues 24 to 44 (VWLSVLFIFRILLLGTAVESA) form a helical membrane-spanning segment. Topologically, residues 45 to 76 (WGDEQSAFRCNTQQPGCENVCYDKSFPISHVR) are extracellular. Disulfide bonds link C54–C192 and C187–C198. Residues 77–97 (FWVLQIIFVSVPTLLYLAHVF) traverse the membrane as a helical segment. The Cytoplasmic portion of the chain corresponds to 98 to 155 (YVMRKEEKLNKKEEELKVAQTDGVNVEMHLKQIEIKKFKYGIEEHGKVKMRGGLLRTY). K144 participates in a covalent cross-link: Glycyl lysine isopeptide (Lys-Gly) (interchain with G-Cter in SUMO). The helical transmembrane segment at 156 to 176 (IISILFKSVFEVAFLLIQWYI) threads the bilayer. Residues 177 to 207 (YGFSLSAVYTCKRDPCPHQVDCFLSRPTEKT) lie on the Extracellular side of the membrane. The helical transmembrane segment at 208–228 (IFIIFMLVVSLVSLALNIIEL) threads the bilayer. Over 229-382 (FYVFFKGVKD…SRPRPDDLEI (154 aa)) the chain is Cytoplasmic. A Glycyl lysine isopeptide (Lys-Gly) (interchain with G-Cter in SUMO) cross-link involves residue K237. The interval 244 to 382 (SDPYHATTGP…SRPRPDDLEI (139 aa)) is interaction with NOV. Y247 carries the phosphotyrosine modification. 3 positions are modified to phosphoserine: S255, S257, and S262. The tract at residues 264–382 (KYAYFNGCSS…SRPRPDDLEI (119 aa)) is interaction with UBQLN4. C271 is subject to S-nitrosocysteine. T275 is subject to Phosphothreonine. 2 positions are modified to phosphoserine: S306 and S314. Residues 317-332 (QNRMGQAGSTISNSHA) show a composition bias toward polar residues. Positions 317–382 (QNRMGQAGST…SRPRPDDLEI (66 aa)) are disordered. A Phosphoserine; by CK1 modification is found at S325. T326 carries the phosphothreonine modification. Phosphoserine; by CK1 occurs at positions 328 and 330. Phosphoserine is present on residues S344 and S365. A compositionally biased stretch (low complexity) spans 362–374 (RPSSRASSRASSR). Residue S368 is modified to Phosphoserine; by PKC/PRKCG and PKC/PRKCD. Residues S369 and S373 each carry the phosphoserine modification.

This sequence belongs to the connexin family. Alpha-type (group II) subfamily. A connexon is composed of a hexamer of connexins. Interacts with SGSM3. Interacts with RIC1/CIP150. Interacts with CNST and CSNK1D. Interacts (via C-terminus) with TJP1. Interacts (via C-terminus) with SRC (via SH3 domain). Interacts (not ubiquitinated) with UBQLN4 (via UBA domain). Interacts with NOV. Interacts with TMEM65. Interacts with ANK3/ANKG and PKP2. In terms of processing, phosphorylation at Ser-325, Ser-328 and Ser-330 by CK1 modulates gap junction assembly. Phosphorylated at Ser-368 by PRKCG; phosphorylation induces disassembly of gap junction plaques and inhibition of gap junction activity. Phosphorylation at Ser-368 by PRKCD triggers its internalization into small vesicles leading to proteasome-mediated degradation. Sumoylated with SUMO1, SUMO2 and SUMO3, which may regulate the level of functional Cx43 gap junctions at the plasma membrane. May be desumoylated by SENP1 or SENP2. Post-translationally, S-nitrosylation at Cys-271 is enriched at the muscle endothelial gap junction in arteries, it augments channel permeability and may regulate of smooth muscle cell to endothelial cell communication. In terms of processing, acetylated in the developing cortex; leading to delocalization from the cell membrane.

The protein localises to the cell membrane. It is found in the cell junction. The protein resides in the gap junction. It localises to the endoplasmic reticulum. Functionally, gap junction protein that acts as a regulator of bladder capacity. A gap junction consists of a cluster of closely packed pairs of transmembrane channels, the connexons, through which materials of low MW diffuse from one cell to a neighboring cell. May play a critical role in the physiology of hearing by participating in the recycling of potassium to the cochlear endolymph. Negative regulator of bladder functional capacity: acts by enhancing intercellular electrical and chemical transmission, thus sensitizing bladder muscles to cholinergic neural stimuli and causing them to contract. May play a role in cell growth inhibition through the regulation of NOV expression and localization. Plays an essential role in gap junction communication in the ventricles. In Oryctolagus cuniculus (Rabbit), this protein is Gap junction alpha-1 protein (GJA1).